The sequence spans 229 residues: Cytochrome c oxidase subunit 2 (229 aa).

At 1-26 (MSTWANLGLQDSASPLMEQLIFFHDH) the chain is on the mitochondrial intermembrane side. Residues 27–48 (ALLILVMITVLVGYLMFMLFFN) form a helical membrane-spanning segment. At 49–62 (SYVNRFLLHGQLIE) the chain is on the mitochondrial matrix side. Residues 63–82 (MIWTILPAIILLFIAMPSLR) form a helical membrane-spanning segment. The Mitochondrial intermembrane portion of the chain corresponds to 83–229 (LLYLLDEINE…IKWISNSVNS (147 aa)). Histidine 161, cysteine 196, glutamate 198, cysteine 200, histidine 204, and methionine 207 together coordinate Cu cation. Glutamate 198 contacts Mg(2+).

The protein belongs to the cytochrome c oxidase subunit 2 family. As to quaternary structure, component of the cytochrome c oxidase (complex IV, CIV), a multisubunit enzyme composed of a catalytic core of 3 subunits and several supernumerary subunits. The complex exists as a monomer or a dimer and forms supercomplexes (SCs) in the inner mitochondrial membrane with ubiquinol-cytochrome c oxidoreductase (cytochrome b-c1 complex, complex III, CIII). The cofactor is Cu cation.

Its subcellular location is the mitochondrion inner membrane. The enzyme catalyses 4 Fe(II)-[cytochrome c] + O2 + 8 H(+)(in) = 4 Fe(III)-[cytochrome c] + 2 H2O + 4 H(+)(out). In terms of biological role, component of the cytochrome c oxidase, the last enzyme in the mitochondrial electron transport chain which drives oxidative phosphorylation. The respiratory chain contains 3 multisubunit complexes succinate dehydrogenase (complex II, CII), ubiquinol-cytochrome c oxidoreductase (cytochrome b-c1 complex, complex III, CIII) and cytochrome c oxidase (complex IV, CIV), that cooperate to transfer electrons derived from NADH and succinate to molecular oxygen, creating an electrochemical gradient over the inner membrane that drives transmembrane transport and the ATP synthase. Cytochrome c oxidase is the component of the respiratory chain that catalyzes the reduction of oxygen to water. Electrons originating from reduced cytochrome c in the intermembrane space (IMS) are transferred via the dinuclear copper A center (CU(A)) of subunit 2 and heme A of subunit 1 to the active site in subunit 1, a binuclear center (BNC) formed by heme A3 and copper B (CU(B)). The BNC reduces molecular oxygen to 2 water molecules using 4 electrons from cytochrome c in the IMS and 4 protons from the mitochondrial matrix. This chain is Cytochrome c oxidase subunit 2 (mt:CoII), found in Drosophila narragansett (Fruit fly).